A 2364-amino-acid polypeptide reads, in one-letter code: Cytotoxin-L (2364 aa).

The segment at 1–91 (MSLVNKAQLQ…EVLELKNNSL (91 aa)) is four-helical bundle. The GT44 domain maps to 96–468 (KNLHFIWIGG…APDVRSTINL (373 aa)). The tract at residues 96–468 (KNLHFIWIGG…APDVRSTINL (373 aa)) is glucosyltransferase region. UDP-alpha-D-glucose-binding positions include 101–103 (IWI), Asn139, 265–270 (LAAASD), and 286–288 (DVD). The Mg(2+) site is built by Asp288, Glu515, and Ser518. Residue 518 to 520 (SLW) participates in UDP-alpha-D-glucose binding. The tract at residues 544–799 (GEDDILDFSQ…KSKNLHELST (256 aa)) is autoprocessing region. 2 residues coordinate Zn(2+): Glu545 and Asp546. The region spanning 567–774 (SSSMRTPNKE…EESIIKDISS (208 aa)) is the Peptidase C80 domain. 1D-myo-inositol hexakisphosphate contacts are provided by Tyr577, Lys600, and Lys647. Residue His653 coordinates Zn(2+). The For protease activity role is filled by His653. The active-site Nucleophile; for protease activity is Cys698. Residue His757 participates in Zn(2+) binding. 1D-myo-inositol hexakisphosphate contacts are provided by Lys764, Lys775, and Lys792. Positions 800–1500 (LLQEIKNNSN…ESIIRNIYMP (701 aa)) are translocation region. Interaction with host SEMA6A and SEMA6B stretches follow at residues 1433–1438 (CIKLIE), 1466–1471 (DNETKY), 1484–1495 (FTAEFSNESIIR), 1504–1511 (NLFIYSSK), and 1596–1601 (YNNLDP). Cell wall-binding repeat units lie at residues 1833–1852 (VSGL…PKNN), 1854–1873 (ITGF…TKSG), 1876–1895 (SIGE…QGIL), 1926–1945 (FIGK…NYRA), 1946–1965 (AVEW…KTGE), 1967–1986 (LKGL…NGIM), 1987–2006 (QTGF…DGVM), 2007–2026 (QVGY…NGER), 2057–2076 (YNGI…SNTA), 2077–2097 (VVGW…NTAE), 2099–2118 (CIGL…NGIR), 2119–2138 (QLGF…SGKI), 2139–2158 (ELGY…SGLV), 2209–2224 (ETGW…YFDP), 2227–2249 (KKAY…NGIM), 2250–2269 (KTGL…DGKM), 2270–2289 (QFGY…DGKM), 2320–2339 (YTGW…EYIA), and 2340–2359 (ATSS…DTAE). The tract at residues 1835–2364 (GLIYINDSLY…PDTAELVVSE (530 aa)) is receptor-binding (CROPS) region.

Belongs to the clostridial glucosylating toxin (LCGT) family. Homomultimer; forms an inactive homomultimer at pH 8, which dissociates at pH 4, leading to cytotoxicity. Interacts with host SEMA6A; interaction promotes toxin entry into host cell. Interacts with host SEMA6B; interaction promotes toxin entry into host cell. Zn(2+) is required as a cofactor. The cofactor is Mn(2+). Mg(2+) serves as cofactor. In terms of processing, undergoes autocatalytic cleavage to release the N-terminal part (Glucosyltransferase TcsL), which constitutes the active part of the toxin, in the host cytosol. 1D-myo-inositol hexakisphosphate-binding (InsP6) activates the peptidase C80 domain and promotes autoprocessing.

It is found in the secreted. Its subcellular location is the host endosome membrane. It localises to the host cytoplasm. The protein resides in the host cytosol. The protein localises to the host cell membrane. It catalyses the reaction L-threonyl-[protein] + UDP-alpha-D-glucose = 3-O-(alpha-D-glucosyl)-L-threonyl-[protein] + UDP + H(+). Its activity is regulated as follows. Protease activity is activated upon binding to 1D-myo-inositol hexakisphosphate (InsP6), which induces conformational reorganization. Its function is as follows. Precursor of a cytotoxin that targets the vascular endothelium, inducing an anti-inflammatory effect and resulting in lethal toxic shock syndrome. TcsL constitutes the main toxin that mediates the pathology of P.sordellii infection, an anaerobic Gram-positive bacterium found in soil and in the gastrointestinal and vaginal tracts of animals and humans; although the majority of carriers are asymptomatic, pathogenic P.sordellii infections arise rapidly and are highly lethal. This form constitutes the precursor of the toxin: it enters into host cells and mediates autoprocessing to release the active toxin (Glucosyltransferase TcsL) into the host cytosol. Targets vascular endothelium by binding to the semaphorin proteins SEMA6A and SEMA6B, and enters host cells via clathrin-mediated endocytosis. Once entered into host cells, acidification in the endosome promotes the membrane insertion of the translocation region and formation of a pore, leading to translocation of the GT44 and peptidase C80 domains across the endosomal membrane. This activates the peptidase C80 domain and autocatalytic processing, releasing the N-terminal part (Glucosyltransferase TcsL), which constitutes the active part of the toxin, in the cytosol. Active form of the toxin, which is released into the host cytosol following autoprocessing and inactivates small GTPases. Acts by mediating monoglucosylation of small GTPases of the Ras (H-Ras/HRAS, K-Ras/KRAS and N-Ras/NRAS) family in host cells at the conserved threonine residue located in the switch I region ('Thr-37/35'), using UDP-alpha-D-glucose as the sugar donor. Does not catalyze monoglucosylation of Ral/RALA. Also able to catalyze monoglucosylation of some members of the Rho family (Rac1 and Rap2A), but with less efficiency than with Ras proteins. Monoglucosylation of host small GTPases completely prevents the recognition of the downstream effector, blocking the GTPases in their inactive form and leading to apoptosis. Induces an anti-inflammatory effect, mainly by inactivating Ras proteins which results in blockage of the cell cycle and killing of immune cells. The absence or moderate local inflammatory response allows C.sordellii spreading in deep tissues, production of toxin which is released in the general circulation and causes a toxic shock syndrome. This chain is Cytotoxin-L, found in Paraclostridium sordellii (Clostridium sordellii).